The primary structure comprises 370 residues: Selenide, water dikinase 2 (370 aa).

Selenocysteine 24 is an active-site residue. A non-standard amino acid (selenocysteine) is located at residue selenocysteine 24. Residues lysine 27, glycine 55 to aspartate 57, aspartate 76, and aspartate 99 each bind ATP. Position 57 (aspartate 57) interacts with Mg(2+). Mg(2+) contacts are provided by aspartate 99 and aspartate 258.

It belongs to the selenophosphate synthase 1 family. Class I subfamily. In terms of assembly, homodimer. The cofactor is Mg(2+). As to expression, first expressed in the midgut anlagen with subsequent expression in a variety of tissues including the gut and nervous system.

It catalyses the reaction hydrogenselenide + ATP + H2O = selenophosphate + AMP + phosphate + 2 H(+). Synthesizes selenophosphate from selenide and ATP. In Drosophila melanogaster (Fruit fly), this protein is Selenide, water dikinase 2 (Sps2).